Consider the following 665-residue polypeptide: Intraflagellar transport protein 70B (665 aa).

TPR repeat units follow at residues 11–44 (DGEFTAVVYRLIRNARYAEAVQLLGGELQRSPRS), 45–78 (RAGLSLLGYCYYRLQEFALAAECYEQLGQLHPEL), 154–187 (TDGQINLGCLLYKEGQYEAACSKFFAALQASGYQ), 189–221 (DLSYNLALAYYSSRQYASALKHIAEIIERGIRQ), 393–424 (LTIQVQEARHNRDDEAIKKAVNEYDETMEKYI), 425–457 (PVLMAQAKIYWNLENYPMVEKIFRKSVEFCNDH), and 459–492 (VWKLNVAHVLFMQENKYKEAIGFYEPIVKKHYDN). Residues 130–154 (PGSRSLVEQLPSREGGEESGGENET) form a disordered region. Residues 508-535 (YIMTSQNEEAEELMRKIEKEEEQLSYDD) adopt a coiled-coil conformation. Residues 544–577 (CIVNLVIGTLYCAKGNYDFGISRVIKSLEPYNKK) form a TPR 8 repeat.

The protein belongs to the TTC30/dfy-1/fleer family. In terms of assembly, interacts with the IFT B complex components IFT27, IFT46, IFT74, IFT52, IFT57, IFT80, IFT81 and IFT88. Interacts with KIF17.

It localises to the cell projection. The protein resides in the cilium. Required for polyglutamylation of axonemal tubulin. Plays a role in anterograde intraflagellar transport (IFT), the process by which cilia precursors are transported from the base of the cilium to the site of their incorporation at the tip. In Homo sapiens (Human), this protein is Intraflagellar transport protein 70B.